Consider the following 252-residue polypeptide: Cytochrome b6-f complex iron-sulfur subunit, chloroplastic (252 aa).

A helical membrane pass occupies residues 94–114 (LVLAAVAPVVASAGGCYLYYF). The Rieske domain maps to 141–235 (WFKSHKKNAR…VEDDNGKILL (95 aa)). Residues Cys181, His183, Cys199, and His202 each contribute to the [2Fe-2S] cluster site. A disulfide bridge links Cys186 with Cys201.

This sequence belongs to the Rieske iron-sulfur protein family. The 4 large subunits of the cytochrome b6-f complex are cytochrome b6, subunit IV (17 kDa polypeptide, petD), cytochrome f and the Rieske protein, while the 4 small subunits are petG, petL, petM and petN. The complex functions as a dimer. Requires [2Fe-2S] cluster as cofactor.

It is found in the plastid. The protein localises to the chloroplast thylakoid membrane. The catalysed reaction is 2 oxidized [plastocyanin] + a plastoquinol + 2 H(+)(in) = 2 reduced [plastocyanin] + a plastoquinone + 4 H(+)(out). Functionally, component of the cytochrome b6-f complex, which mediates electron transfer between photosystem II (PSII) and photosystem I (PSI), cyclic electron flow around PSI, and state transitions. The chain is Cytochrome b6-f complex iron-sulfur subunit, chloroplastic (petC) from Bigelowiella natans (Pedinomonas minutissima).